A 207-amino-acid chain; its full sequence is UPF0319 protein VV1_2115 (207 aa).

Positions 1-18 (MLRVLGLAGMLMSFNIHA) are cleaved as a signal peptide.

The protein belongs to the UPF0319 family.

This is UPF0319 protein VV1_2115 from Vibrio vulnificus (strain CMCP6).